Consider the following 688-residue polypeptide: Sciellin (688 aa).

The span at 1-25 (MSNVTLRKMSPTGNEMKSTTQGTTR) shows a compositional bias: polar residues. The segment at 1-29 (MSNVTLRKMSPTGNEMKSTTQGTTRKQQD) is disordered. Lys-83 carries the N6-acetyllysine modification. Positions 134–231 (QPGGSLNANT…TNRSAERNIR (98 aa)) are disordered. The segment covering 140 to 154 (NANTSNTIASTSATT) has biased composition (low complexity). Residues 186 to 195 (VHPPIPPKPS) show a composition bias toward pro residues. A run of 16 repeats spans residues 251 to 266 (GEELDNLIKMNKSLNR), 267 to 286 (NQGLDSLFRANPKVEEREKR), 287 to 306 (AKSLESLIYMSTRTDKDGKG), 307 to 326 (IQSLGSPIKVNQRTDKNEKG), 327 to 346 (RQNLESVAKVNARMNKTSRR), 347 to 366 (SEDLDNATEVNPKGHENTTG), 367 to 386 (KKDLDGLIKVDPETNKNITR), 387 to 406 (GQSLDNLIKVTPEVKRSNQG), 407 to 426 (SKDLNNFIKVYPGTEKSTEG), 427 to 446 (GQSLDSLIKVTPERNRTNQG), 447 to 465 (NQDLENLIKVIPSANKSSE), 466 to 484 (QGLDEHINVSPKAVKNTDG), 485 to 504 (KQDLDKLIKVNPEIFTNNQR), 505 to 523 (NQDLANLIKVNPAVIRNNQ), 524 to 543 (SQDLDNLIKVKPSALRNTNR), and 544 to 563 (DQNLENLIEVNSHVSENKNG). A 16 X approximate tandem repeats region spans residues 251–563 (GEELDNLIKM…NSHVSENKNG (313 aa)). Ser-289 carries the phosphoserine modification. The tract at residues 340-373 (MNKTSRRSEDLDNATEVNPKGHENTTGKKDLDGL) is disordered. A compositionally biased stretch (basic and acidic residues) spans 358-373 (PKGHENTTGKKDLDGL). A Phosphoserine modification is found at Ser-389. The region spanning 619–685 (DMCTYCRKPL…EPCYSKIMAK (67 aa)) is the LIM zinc-binding domain.

In terms of tissue distribution, highly expressed in esophagus. It is also expressed in keratinocytes, amniotic tissue, foreskin stratum spinosum and stratum granulosum, hair follicle and nail.

It localises to the cytoplasm. Its subcellular location is the membrane. Its function is as follows. May function in the assembly or regulation of proteins in the cornified envelope. The LIM domain may be involved in homotypic or heterotypic associations and may function to localize sciellin to the cornified envelope. The protein is Sciellin (SCEL) of Homo sapiens (Human).